A 144-amino-acid chain; its full sequence is Transcriptional regulator MraZ (144 aa).

SpoVT-AbrB domains lie at 5–47 and 76–119; these read EYDH…TLDE and AVEV…DRET.

The protein belongs to the MraZ family. In terms of assembly, forms oligomers.

It localises to the cytoplasm. It is found in the nucleoid. The chain is Transcriptional regulator MraZ from Staphylococcus aureus.